Here is a 269-residue protein sequence, read N- to C-terminus: Pertussis toxin subunit 1 homolog (269 aa).

An N-terminal signal peptide occupies residues 1 to 34 (MRCTRAIRQTARTGWLTWLAILAVTAPVTSPAWA).

Belongs to the bacterial exotoxin subunit A family.

This Bordetella bronchiseptica (strain ATCC BAA-588 / NCTC 13252 / RB50) (Alcaligenes bronchisepticus) protein is Pertussis toxin subunit 1 homolog (ptxA).